We begin with the raw amino-acid sequence, 376 residues long: Flagellar P-ring protein (376 aa).

Positions 1 to 29 (MTQRPFSLLSHLGRICLAAAMLAALPAQA) are cleaved as a signal peptide.

Belongs to the FlgI family. The basal body constitutes a major portion of the flagellar organelle and consists of four rings (L,P,S, and M) mounted on a central rod.

It localises to the periplasm. It is found in the bacterial flagellum basal body. Functionally, assembles around the rod to form the L-ring and probably protects the motor/basal body from shearing forces during rotation. The polypeptide is Flagellar P-ring protein (Bordetella avium (strain 197N)).